The following is a 587-amino-acid chain: Kelch-like protein 3 (587 aa).

At S10 the chain carries Phosphoserine. The 68-residue stretch at 50–117 folds into the BTB domain; sequence CDVMIVAEDV…IYTAEIEVTE (68 aa). A BACK domain is found at 152-254; sequence CLGIRAFADV…PRDYLVQTVE (103 aa). Phosphothreonine is present on T295. 6 Kelch repeats span residues 302-347, 348-394, 396-441, 442-490, 491-537, and 539-585; these read VMIV…FMAG, HVYA…VLND, LYAV…VVEG, KLYA…VLSG, QLYA…AVNG, and LYVV…VIHK. T375 carries the post-translational modification Phosphothreonine. S376 is subject to Phosphoserine. S433 bears the Phosphoserine; by PKA and PKC mark.

The protein belongs to the KLHL3 family. Homodimer. Component of the BCR(KLHL3) E3 ubiquitin ligase complex, at least composed of CUL3 and KLHL3 and RBX1. Interacts with CLDN8. Post-translationally, phosphorylation at Ser-433 by PKA or PKC decreases the interaction with WNK1 and WNK4, leading to inhibit their degradation by the BCR(KLHL3) complex. Phosphorylated at Ser-433 by PKC in response to angiotensin II signaling, decreasing ability to promote degradation of WNK1 and WNK4, leading to activation of Na-Cl cotransporter SLC12A3/NCC. Phosphorylation at Ser-433 is increased by insulin. Dephosphorylated at Ser-433 by calcineurin PPP3CA, promoting degradation of WNK1 and WNK4. Widely expressed.

The protein localises to the cytoplasm. It localises to the cytosol. It is found in the cytoskeleton. The protein operates within protein modification; protein ubiquitination. Functionally, substrate-specific adapter of a BCR (BTB-CUL3-RBX1) E3 ubiquitin ligase complex that acts as a regulator of ion transport in the distal nephron. The BCR(KLHL3) complex acts by mediating ubiquitination and degradation of WNK1 and WNK4, two activators of Na-Cl cotransporter SLC12A3/NCC in distal convoluted tubule cells of kidney, thereby regulating NaCl reabsorption. The BCR(KLHL3) complex also mediates ubiquitination and degradation of WNK3. The BCR(KLHL3) complex also mediates ubiquitination of CLDN8, a tight-junction protein required for paracellular chloride transport in the kidney, leading to its degradation. The sequence is that of Kelch-like protein 3 from Homo sapiens (Human).